Here is a 444-residue protein sequence, read N- to C-terminus: Spermatogenesis-associated protein 1 (444 aa).

The segment covering Gly145–Pro160 has biased composition (basic and acidic residues). Positions Gly145–Thr229 are disordered. Residues Ser268 to Leu403 adopt a coiled-coil conformation.

Interacts with IFT20.

It localises to the cytoplasmic vesicle. It is found in the secretory vesicle. Its subcellular location is the acrosome. This is Spermatogenesis-associated protein 1 (Spata1) from Rattus norvegicus (Rat).